The chain runs to 189 residues: Adenylate kinase (189 aa).

10 to 15 (AAGKGT) is a binding site for ATP. Residues 30–59 (STGDMLRAAIASGSELGQKVKGVLDRGELV) form an NMP region. AMP-binding positions include T31, R36, 57 to 59 (ELV), 85 to 88 (GFPR), and Q92. Positions 126-136 (KRFAEQGRPDD) are LID. R127 contributes to the ATP binding site. 2 residues coordinate AMP: R133 and R144. A172 lines the ATP pocket.

The protein belongs to the adenylate kinase family. Monomer.

Its subcellular location is the cytoplasm. It catalyses the reaction AMP + ATP = 2 ADP. Its pathway is purine metabolism; AMP biosynthesis via salvage pathway; AMP from ADP: step 1/1. Functionally, catalyzes the reversible transfer of the terminal phosphate group between ATP and AMP. Plays an important role in cellular energy homeostasis and in adenine nucleotide metabolism. This is Adenylate kinase from Caulobacter sp. (strain K31).